The following is a 285-amino-acid chain: Integrin alpha-1 (285 aa).

Topologically, residues 1–285 (ENMTFGTTLV…HYSQDWVMLG (285 aa)) are extracellular. N-linked (GlcNAc...) asparagine glycosylation is found at Asn-2, Asn-40, Asn-208, and Asn-232. Positions 66–279 (IVLDGSNSIY…QAGFSAHYSQ (214 aa)) constitute a VWFA domain.

Belongs to the integrin alpha chain family. Heterodimer of an alpha and a beta subunit. Alpha-1 associates with beta-1.

The protein resides in the membrane. Integrin alpha-1/beta-1 is a receptor for laminin and collagen. It recognizes the proline-hydroxylated sequence G-F-P-G-E-R in collagen. Involved in anchorage-dependent, negative regulation of EGF-stimulated cell growth. The polypeptide is Integrin alpha-1 (ITGA1) (Gallus gallus (Chicken)).